The chain runs to 360 residues: Membrane-bound lytic murein transglycosylase C (360 aa).

A signal peptide spans 1–16 (MKKYLALALIAPLLVS). Cysteine 17 is lipidated: N-palmitoyl cysteine. Cysteine 17 carries S-diacylglycerol cysteine lipidation.

This sequence belongs to the transglycosylase Slt family.

The protein localises to the cell outer membrane. The enzyme catalyses Exolytic cleavage of the (1-&gt;4)-beta-glycosidic linkage between N-acetylmuramic acid (MurNAc) and N-acetylglucosamine (GlcNAc) residues in peptidoglycan, from either the reducing or the non-reducing ends of the peptidoglycan chains, with concomitant formation of a 1,6-anhydrobond in the MurNAc residue.. Functionally, murein-degrading enzyme. May play a role in recycling of muropeptides during cell elongation and/or cell division. The protein is Membrane-bound lytic murein transglycosylase C of Klebsiella pneumoniae (strain 342).